The chain runs to 45 residues: uncharacterized protein (45 aa).

This is an uncharacterized protein from Lolium latent virus (isolate Lolium/USA/US1/-) (LoLV).